The primary structure comprises 1705 residues: Receptor-type tyrosine-protein phosphatase V (1705 aa).

The first 18 residues, 1–18, serve as a signal peptide directing secretion; it reads MRPLILLAALLWLQDSLA. Residues 19-1077 lie on the Extracellular side of the membrane; that stretch reads QEDVCSSLDG…QASISLVAMP (1059 aa). The segment at 24 to 44 is disordered; it reads SSLDGSPDRQGGGPPLSVSVT. Fibronectin type-III domains are found at residues 37–129, 130–222, 218–305, 306–388, 393–454, 475–569, 565–654, 655–749, 744–831, and 832–926; these read PPLS…TAPT, VVRG…VPPD, PVPP…EWTY, PSYP…SIWL, ARPM…HYRV, PPQS…APPT, PAPP…TGWT, PPSA…TPNE, PLTP…VLSV, and EPGP…SAEV. Asn-74, Asn-89, Asn-117, Asn-174, Asn-239, Asn-259, Asn-299, Asn-345, Asn-431, Asn-551, Asn-570, Asn-620, Asn-649, Asn-663, and Asn-737 each carry an N-linked (GlcNAc...) asparagine glycan. Asn-851, Asn-882, Asn-970, and Asn-982 each carry an N-linked (GlcNAc...) asparagine glycan. Residues 1078–1100 form a helical membrane-spanning segment; that stretch reads LTVMMGTVVGCIIIVCAVLCLLC. The Cytoplasmic portion of the chain corresponds to 1101 to 1705; the sequence is RRGLKGPRSE…LRNRLPRARK (605 aa). 2 consecutive Tyrosine-protein phosphatase domains span residues 1150 to 1409 and 1427 to 1695; these read FFQE…LLNK and NFAQ…LNSA. Residues Asp-1316, 1350 to 1356, and Gln-1394 contribute to the substrate site; that span reads CSAGVGR. Cys-1350 functions as the Phosphocysteine intermediate in the catalytic mechanism.

This sequence belongs to the protein-tyrosine phosphatase family. Receptor class 3 subfamily.

It is found in the membrane. It catalyses the reaction O-phospho-L-tyrosyl-[protein] + H2O = L-tyrosyl-[protein] + phosphate. Protein tyrosine phosphatase that acts as a regulator of energy metabolism by mediating dephosphorylation of insulin receptor (Insr). Prevents decarboxylation of osteocalcin (Bglap and Bglap2) via an indirect mechanism: dephosphorylation of insulin receptor prevents insulin signaling-dependent decarboxylation of osteocalcin, preventing the hormone activity of osteocalcin. May play a role in the maintenance of pluripotency. The sequence is that of Receptor-type tyrosine-protein phosphatase V (Ptprv) from Mus musculus (Mouse).